We begin with the raw amino-acid sequence, 129 residues long: Phosphoribosyl-AMP cyclohydrolase (129 aa).

D78 serves as a coordination point for Mg(2+). Residue C79 coordinates Zn(2+). Positions 80 and 82 each coordinate Mg(2+). C96 and C103 together coordinate Zn(2+).

Belongs to the PRA-CH family. Homodimer. Mg(2+) is required as a cofactor. Zn(2+) serves as cofactor.

It is found in the cytoplasm. It carries out the reaction 1-(5-phospho-beta-D-ribosyl)-5'-AMP + H2O = 1-(5-phospho-beta-D-ribosyl)-5-[(5-phospho-beta-D-ribosylamino)methylideneamino]imidazole-4-carboxamide. Its pathway is amino-acid biosynthesis; L-histidine biosynthesis; L-histidine from 5-phospho-alpha-D-ribose 1-diphosphate: step 3/9. Its function is as follows. Catalyzes the hydrolysis of the adenine ring of phosphoribosyl-AMP. This chain is Phosphoribosyl-AMP cyclohydrolase, found in Nitrosomonas europaea (strain ATCC 19718 / CIP 103999 / KCTC 2705 / NBRC 14298).